The chain runs to 438 residues: tRNA(Ile)-lysidine synthase (438 aa).

Position 27–32 (27–32 (SGGVDS)) interacts with ATP.

The protein belongs to the tRNA(Ile)-lysidine synthase family.

It localises to the cytoplasm. It carries out the reaction cytidine(34) in tRNA(Ile2) + L-lysine + ATP = lysidine(34) in tRNA(Ile2) + AMP + diphosphate + H(+). Ligates lysine onto the cytidine present at position 34 of the AUA codon-specific tRNA(Ile) that contains the anticodon CAU, in an ATP-dependent manner. Cytidine is converted to lysidine, thus changing the amino acid specificity of the tRNA from methionine to isoleucine. The polypeptide is tRNA(Ile)-lysidine synthase (Vibrio parahaemolyticus serotype O3:K6 (strain RIMD 2210633)).